Here is a 317-residue protein sequence, read N- to C-terminus: tRNA pseudouridine synthase B (317 aa).

Aspartate 47 functions as the Nucleophile in the catalytic mechanism.

The protein belongs to the pseudouridine synthase TruB family. Type 1 subfamily.

The enzyme catalyses uridine(55) in tRNA = pseudouridine(55) in tRNA. Its function is as follows. Responsible for synthesis of pseudouridine from uracil-55 in the psi GC loop of transfer RNAs. In Shewanella sp. (strain MR-4), this protein is tRNA pseudouridine synthase B.